Reading from the N-terminus, the 512-residue chain is Putative UDP-glucuronosyltransferase ugt-55 (512 aa).

The N-terminal stretch at 1 to 22 (MQLLTLPTLIFIFLNYGTPCLS) is a signal peptide. The chain crosses the membrane as a helical span at residues 487–507 (ILLYLDSIAMFTLTLLTMILI).

The protein belongs to the UDP-glycosyltransferase family.

Its subcellular location is the membrane. The catalysed reaction is glucuronate acceptor + UDP-alpha-D-glucuronate = acceptor beta-D-glucuronoside + UDP + H(+). The protein is Putative UDP-glucuronosyltransferase ugt-55 (ugt-55) of Caenorhabditis elegans.